We begin with the raw amino-acid sequence, 549 residues long: Probable protein kinase UbiB (549 aa).

The 379-residue stretch at 123 to 501 (DFDETPLASA…QQQAHKSNYM (379 aa)) folds into the Protein kinase domain. ATP contacts are provided by residues 129-137 (LASASISQV) and Lys152. Asp287 (proton acceptor) is an active-site residue. The next 2 membrane-spanning stretches (helical) occupy residues 499-516 (NYMLITSAVLLICGTLLF) and 521-540 (TLWSPYVCLTSGVLMWFIGW).

It belongs to the ABC1 family. UbiB subfamily.

Its subcellular location is the cell inner membrane. It functions in the pathway cofactor biosynthesis; ubiquinone biosynthesis [regulation]. In terms of biological role, is probably a protein kinase regulator of UbiI activity which is involved in aerobic coenzyme Q (ubiquinone) biosynthesis. The polypeptide is Probable protein kinase UbiB (Shewanella sp. (strain W3-18-1)).